The sequence spans 257 residues: uncharacterized protein (257 aa).

N-linked (GlcNAc...) asparagine; by host glycans are attached at residues asparagine 61, asparagine 95, asparagine 102, asparagine 111, asparagine 139, asparagine 148, and asparagine 152. A helical transmembrane segment spans residues 233-253; that stretch reads WYIIGGIFWVIVLIILVIFII.

The protein resides in the host membrane. Its subcellular location is the virion. This is an uncharacterized protein from Acanthamoeba polyphaga (Amoeba).